Reading from the N-terminus, the 908-residue chain is DNA mismatch repair protein MutS (908 aa).

Position 662–669 (662–669 (GPNMGGKS)) interacts with ATP.

Belongs to the DNA mismatch repair MutS family.

This protein is involved in the repair of mismatches in DNA. It is possible that it carries out the mismatch recognition step. This protein has a weak ATPase activity. The protein is DNA mismatch repair protein MutS of Rhizobium johnstonii (strain DSM 114642 / LMG 32736 / 3841) (Rhizobium leguminosarum bv. viciae).